A 33-amino-acid polypeptide reads, in one-letter code: Lysozyme C, spleen isozyme (33 aa).

It belongs to the glycosyl hydrolase 22 family. Monomer.

The enzyme catalyses Hydrolysis of (1-&gt;4)-beta-linkages between N-acetylmuramic acid and N-acetyl-D-glucosamine residues in a peptidoglycan and between N-acetyl-D-glucosamine residues in chitodextrins.. Lysozymes have primarily a bacteriolytic function; those in tissues and body fluids are associated with the monocyte-macrophage system and enhance the activity of immunoagents. The chain is Lysozyme C, spleen isozyme from Equus caballus (Horse).